Reading from the N-terminus, the 179-residue chain is Gut granule loss protein 3 (179 aa).

Residues 40–59 (DLDSASSGVGSSTCTEEQES) form a disordered region. Positions 42-54 (DSASSGVGSSTCT) are enriched in polar residues.

The protein is Gut granule loss protein 3 (glo-3) of Caenorhabditis elegans.